Reading from the N-terminus, the 459-residue chain is LETM1 domain-containing protein LETM2, mitochondrial (459 aa).

The transit peptide at 1–25 (MAFYSYNSFLAIFWTRLPGHSVHPP) directs the protein to the mitochondrion. Residues 26–176 (CSHFPPLAFF…LLRTCADVFR (151 aa)) lie on the Mitochondrial intermembrane side of the membrane. The segment at 88–114 (GKPQPEQIPEEPKATDPQPTKDDQTEV) is disordered. The span at 97-111 (EEPKATDPQPTKDDQ) shows a compositional bias: basic and acidic residues. A helical transmembrane segment spans residues 177–197 (LVPFVVFIIVPFMEFLIPVFL). The Mitochondrial matrix segment spans residues 198-459 (KLFPDMLPST…QNSKANSKGA (262 aa)). In terms of domain architecture, Letm1 RBD spans 220–440 (KMMGAKLEIA…PAPQLNGTKI (221 aa)). The tract at residues 403–459 (LPPSIETPKTNLGIPSSPPPESKEDITDPAPQLNGTKILQAKSQETSQNSKANSKGA) is disordered. Polar residues predominate over residues 435–459 (LNGTKILQAKSQETSQNSKANSKGA).

In terms of tissue distribution, testis and sperm.

It is found in the mitochondrion inner membrane. This is LETM1 domain-containing protein LETM2, mitochondrial (Letm2) from Rattus norvegicus (Rat).